A 415-amino-acid polypeptide reads, in one-letter code: DNA polymerase IV (415 aa).

A UmuC domain is found at 15 to 196 (ILHVDMNCFF…LSVEAMHGIG (182 aa)). The Mg(2+) site is built by Asp19 and Asp115. Glu116 is a catalytic residue. Over residues 235–246 (KRAKGTDDREVD) the composition is skewed to basic and acidic residues. Residues 235–260 (KRAKGTDDREVDPSQMGQHKSVGNSM) are disordered. Residues 249–260 (QMGQHKSVGNSM) are compositionally biased toward polar residues.

It belongs to the DNA polymerase type-Y family. As to quaternary structure, monomer. The cofactor is Mg(2+).

Its subcellular location is the cytoplasm. It catalyses the reaction DNA(n) + a 2'-deoxyribonucleoside 5'-triphosphate = DNA(n+1) + diphosphate. Poorly processive, error-prone DNA polymerase involved in untargeted mutagenesis. Copies undamaged DNA at stalled replication forks, which arise in vivo from mismatched or misaligned primer ends. These misaligned primers can be extended by PolIV. Exhibits no 3'-5' exonuclease (proofreading) activity. May be involved in translesional synthesis, in conjunction with the beta clamp from PolIII. The chain is DNA polymerase IV from Bacillus cereus (strain ATCC 14579 / DSM 31 / CCUG 7414 / JCM 2152 / NBRC 15305 / NCIMB 9373 / NCTC 2599 / NRRL B-3711).